A 507-amino-acid polypeptide reads, in one-letter code: Histidine ammonia-lyase (507 aa).

A cross-link (5-imidazolinone (Ala-Gly)) is located at residues 141-143 (ASG). At S142 the chain carries 2,3-didehydroalanine (Ser).

This sequence belongs to the PAL/histidase family. Contains an active site 4-methylidene-imidazol-5-one (MIO), which is formed autocatalytically by cyclization and dehydration of residues Ala-Ser-Gly.

The protein localises to the cytoplasm. It catalyses the reaction L-histidine = trans-urocanate + NH4(+). Its pathway is amino-acid degradation; L-histidine degradation into L-glutamate; N-formimidoyl-L-glutamate from L-histidine: step 1/3. This Burkholderia cenocepacia (strain ATCC BAA-245 / DSM 16553 / LMG 16656 / NCTC 13227 / J2315 / CF5610) (Burkholderia cepacia (strain J2315)) protein is Histidine ammonia-lyase.